The primary structure comprises 430 residues: Leucoanthocyanidin dioxygenase (430 aa).

The 100-residue stretch at 212–311 (LLLQMKINYY…RFSWAIFCEP (100 aa)) folds into the Fe2OG dioxygenase domain. His236, Asp238, and His292 together coordinate Fe cation. Basic and acidic residues-rich tracts occupy residues 376–407 (KKDN…KEDG) and 415–430 (KVFK…EESK). The segment at 376-430 (KKDNQDAVAENKDIKEDEQCGPAEHKDIKEDGQGAAAENKVFKENNQDVAAEESK) is disordered.

The protein belongs to the iron/ascorbate-dependent oxidoreductase family. Fe cation is required as a cofactor. The cofactor is L-ascorbate. As to expression, predominantly expressed in corollas and at lower levels in anthers.

The catalysed reaction is a (2R,3S,4S)-leucoanthocyanidin + 2-oxoglutarate + O2 = a 4-H-anthocyanidin with a 3-hydroxy group + succinate + CO2 + 2 H2O. It participates in pigment biosynthesis; anthocyanin biosynthesis. In terms of biological role, oxidation of leucoanthocyanidins into anthocyanidins. This chain is Leucoanthocyanidin dioxygenase (ANT17), found in Petunia hybrida (Petunia).